Consider the following 471-residue polypeptide: Adenosylhomocysteinase (471 aa).

The substrate site is built by Thr60, Asp135, and Glu196. Residue 197–199 (TTT) coordinates NAD(+). Residues Lys226 and Asp230 each contribute to the substrate site. NAD(+) is bound by residues Asn231, 260–265 (GYGDVG), Glu283, Asn318, 339–341 (IGH), and Asn387.

Belongs to the adenosylhomocysteinase family. NAD(+) is required as a cofactor.

The protein resides in the cytoplasm. It carries out the reaction S-adenosyl-L-homocysteine + H2O = L-homocysteine + adenosine. Its pathway is amino-acid biosynthesis; L-homocysteine biosynthesis; L-homocysteine from S-adenosyl-L-homocysteine: step 1/1. Its function is as follows. May play a key role in the regulation of the intracellular concentration of adenosylhomocysteine. The polypeptide is Adenosylhomocysteinase (Chlorobaculum parvum (strain DSM 263 / NCIMB 8327) (Chlorobium vibrioforme subsp. thiosulfatophilum)).